The chain runs to 1549 residues: Zinc finger MYM-type protein 4 (1549 aa).

An N-acetylalanine modification is found at A2. The interval 83–108 is disordered; the sequence is VVSSDNEDEQDCSSKDNLVSSVHTDG. Residues 97-106 show a composition bias toward polar residues; sequence KDNLVSSVHT. At T106 the chain carries Phosphothreonine. Residues S109 and S121 each carry the phosphoserine modification. Residues K139 and K148 each participate in a glycyl lysine isopeptide (Lys-Gly) (interchain with G-Cter in SUMO2) cross-link. S161 carries the phosphoserine modification. A Glycyl lysine isopeptide (Lys-Gly) (interchain with G-Cter in SUMO2) cross-link involves residue K195. A Phosphoserine modification is found at S197. Glycyl lysine isopeptide (Lys-Gly) (interchain with G-Cter in SUMO2) cross-links involve residues K201 and K232. Residue S242 is modified to Phosphoserine. K250 participates in a covalent cross-link: Glycyl lysine isopeptide (Lys-Gly) (interchain with G-Cter in SUMO1); alternate. K250 is covalently cross-linked (Glycyl lysine isopeptide (Lys-Gly) (interchain with G-Cter in SUMO2); alternate). The disordered stretch occupies residues 267–291; the sequence is GLLDRVKDEPDNAQEYSHGQQQKTQ. Residues K273, K289, K327, K400, K428, and K430 each participate in a glycyl lysine isopeptide (Lys-Gly) (interchain with G-Cter in SUMO2) cross-link. Positions 280–290 are enriched in polar residues; that stretch reads QEYSHGQQQKT. MYM-type zinc fingers lie at residues 362–402, 414–457, 464–499, 510–544, 554–592, 600–631, 708–742, 749–788, and 795–829; these read QLFC…PKDV, KDFC…RHEV, HKLCSDACFSKFRSANNLTMNCCENCGGYCYSGSGQ, KKFCSSMCVTSYKQKSAKITPCALCKSLRSSAEMI, ELFCSVNCLSAYRVKMVTSAGVQVQCNSCKTSAIPQYHL, RNFCSYSCVVAFQNLFNKPTGMNSSVVPLSQG, FQFCGKNCCDEYKKINNVMAMCEYCKIEKIIKETV, KSFCSEGCKLLYKHDLGKRWGSHCKMCSYCLQTSPKLIQN, and EDFCCEECMSKYTVLFYQMAKCDGCKRQGKLSESL. Residues K1035 and K1062 each participate in a glycyl lysine isopeptide (Lys-Gly) (interchain with G-Cter in SUMO2) cross-link. Phosphoserine is present on residues S1065 and S1072. Residues K1081 and K1128 each participate in a glycyl lysine isopeptide (Lys-Gly) (interchain with G-Cter in SUMO2) cross-link. The segment at 1124–1185 is disordered; sequence DSELKPFSKG…RRGRKKSVVP (62 aa). Positions 1125-1135 are enriched in basic and acidic residues; that stretch reads SELKPFSKGET. Basic residues predominate over residues 1161–1182; it reads SRTRRRHRDGFPQPRRRGRKKS. S1182 and S1257 each carry phosphoserine. K1432 is covalently cross-linked (Glycyl lysine isopeptide (Lys-Gly) (interchain with G-Cter in SUMO2)). 3 positions are modified to phosphoserine: S1540, S1543, and S1548.

Functionally, plays a role in the regulation of cell morphology and cytoskeletal organization. The sequence is that of Zinc finger MYM-type protein 4 (Zmym4) from Mus musculus (Mouse).